A 147-amino-acid chain; its full sequence is Protein-export protein SecB 2 (147 aa).

It belongs to the SecB family. Homotetramer, a dimer of dimers. One homotetramer interacts with 1 SecA dimer.

It is found in the cytoplasm. In terms of biological role, one of the proteins required for the normal export of preproteins out of the cell cytoplasm. It is a molecular chaperone that binds to a subset of precursor proteins, maintaining them in a translocation-competent state. It also specifically binds to its receptor SecA. This Francisella tularensis subsp. novicida (strain U112) protein is Protein-export protein SecB 2.